A 227-amino-acid chain; its full sequence is Cytochrome c oxidase subunit 2 (227 aa).

At 1–14 (MAYPMQLGFQDATS) the chain is on the mitochondrial intermembrane side. Residues 15–45 (PIMEELLHFHDHTLMIVFLISSLVLYIISLM) form a helical membrane-spanning segment. Residues 46-59 (LTTKLTHTSTMDAQ) lie on the Mitochondrial matrix side of the membrane. Residues 60 to 87 (EVETIWTILPAIILIMIALPSLRILYMM) form a helical membrane-spanning segment. The Mitochondrial intermembrane portion of the chain corresponds to 88–227 (DEINNPSLTV…YFEKWSASML (140 aa)). Cysteine 196, glutamate 198, cysteine 200, histidine 204, and methionine 207 together coordinate Cu cation. Residue glutamate 198 participates in Mg(2+) binding. Tyrosine 218 carries the phosphotyrosine modification.

The protein belongs to the cytochrome c oxidase subunit 2 family. In terms of assembly, component of the cytochrome c oxidase (complex IV, CIV), a multisubunit enzyme composed of 14 subunits. The complex is composed of a catalytic core of 3 subunits MT-CO1, MT-CO2 and MT-CO3, encoded in the mitochondrial DNA, and 11 supernumerary subunits COX4I, COX5A, COX5B, COX6A, COX6B, COX6C, COX7A, COX7B, COX7C, COX8 and NDUFA4, which are encoded in the nuclear genome. The complex exists as a monomer or a dimer and forms supercomplexes (SCs) in the inner mitochondrial membrane with NADH-ubiquinone oxidoreductase (complex I, CI) and ubiquinol-cytochrome c oxidoreductase (cytochrome b-c1 complex, complex III, CIII), resulting in different assemblies (supercomplex SCI(1)III(2)IV(1) and megacomplex MCI(2)III(2)IV(2)). Found in a complex with TMEM177, COA6, COX18, COX20, SCO1 and SCO2. Interacts with TMEM177 in a COX20-dependent manner. Interacts with COX20. Interacts with COX16. Requires Cu cation as cofactor.

Its subcellular location is the mitochondrion inner membrane. It catalyses the reaction 4 Fe(II)-[cytochrome c] + O2 + 8 H(+)(in) = 4 Fe(III)-[cytochrome c] + 2 H2O + 4 H(+)(out). Component of the cytochrome c oxidase, the last enzyme in the mitochondrial electron transport chain which drives oxidative phosphorylation. The respiratory chain contains 3 multisubunit complexes succinate dehydrogenase (complex II, CII), ubiquinol-cytochrome c oxidoreductase (cytochrome b-c1 complex, complex III, CIII) and cytochrome c oxidase (complex IV, CIV), that cooperate to transfer electrons derived from NADH and succinate to molecular oxygen, creating an electrochemical gradient over the inner membrane that drives transmembrane transport and the ATP synthase. Cytochrome c oxidase is the component of the respiratory chain that catalyzes the reduction of oxygen to water. Electrons originating from reduced cytochrome c in the intermembrane space (IMS) are transferred via the dinuclear copper A center (CU(A)) of subunit 2 and heme A of subunit 1 to the active site in subunit 1, a binuclear center (BNC) formed by heme A3 and copper B (CU(B)). The BNC reduces molecular oxygen to 2 water molecules using 4 electrons from cytochrome c in the IMS and 4 protons from the mitochondrial matrix. The sequence is that of Cytochrome c oxidase subunit 2 (MT-CO2) from Ovis aries (Sheep).